We begin with the raw amino-acid sequence, 180 residues long: Probable RNA 2'-phosphotransferase (180 aa).

This sequence belongs to the KptA/TPT1 family.

Functionally, removes the 2'-phosphate from RNA via an intermediate in which the phosphate is ADP-ribosylated by NAD followed by a presumed transesterification to release the RNA and generate ADP-ribose 1''-2''-cyclic phosphate (APPR&gt;P). May function as an ADP-ribosylase. In Thermococcus kodakarensis (strain ATCC BAA-918 / JCM 12380 / KOD1) (Pyrococcus kodakaraensis (strain KOD1)), this protein is Probable RNA 2'-phosphotransferase.